Consider the following 1012-residue polypeptide: Vacuolar membrane protease (1012 aa).

Over 1 to 60 (MRRSTDPRNLLVRRGPLLVDGESAISELDPGFFPTGDAPKMSSTTRRRFNLIAFTPGPVT) the chain is Cytoplasmic. The helical transmembrane segment at 61 to 81 (VISSLVYLALLIPLLLVHTIV) threads the bilayer. The Vacuolar segment spans residues 82 to 432 (PSAPKSNPKG…SFAVFRLHTL (351 aa)). A glycan (N-linked (GlcNAc...) asparagine) is linked at asparagine 159. Positions 215 and 227 each coordinate Zn(2+). The active-site Proton acceptor is the glutamate 261. Glutamate 262, glutamate 287, and histidine 360 together coordinate Zn(2+). The chain crosses the membrane as a helical span at residues 433–453 (FAISVTLLVVCPIVLFVIGII). The Cytoplasmic portion of the chain corresponds to 454–487 (LSKMDKMYLFSIHETIPETKEKVSVRGLRGLFRY). The helical transmembrane segment at 488 to 508 (PIILVVSSGILIGLSYLLAKV) threads the bilayer. Over 509–518 (NPFIVHSSSY) the chain is Vacuolar. The helical transmembrane segment at 519-539 (AVWSMMLSSWIFMTWFLSCIA) threads the bilayer. At 540–550 (DFFRPSALHRA) the chain is on the cytoplasmic side. A helical membrane pass occupies residues 551–571 (YTFTWQLLVMWVLLVISTVYV). The Vacuolar portion of the chain corresponds to 572 to 575 (NQHD). A helical membrane pass occupies residues 576–596 (IAAGYFIVFYFAGTFLATLIS). Residues 597-710 (YLELFALPNK…WSASLPTWTW (114 aa)) are Cytoplasmic-facing. Positions 614–629 (SQYPSRLGSNRSSRIL) are enriched in polar residues. The segment at 614 to 660 (SQYPSRLGSNRSSRILSPSADELPTGGDNNGEIYDGEEEPTESSSLL) is disordered. Residues 711–731 (VLQFLFVGPVVIMFIGQLGLF) traverse the membrane as a helical segment. Topologically, residues 732-743 (LTSAMNQVGADG) are vacuolar. Residues 744–764 (VGLLVVYIAIAVFSVLLLIPL) traverse the membrane as a helical segment. The Cytoplasmic portion of the chain corresponds to 765–777 (SPFIHRFTYHVPT). A helical transmembrane segment spans residues 778-798 (FLLLVFIATLIYNLAAFPFSA). The Vacuolar segment spans residues 799-1012 (ENRLKIFFVQ…DGLVEVSRGF (214 aa)). N-linked (GlcNAc...) asparagine glycans are attached at residues asparagine 842 and asparagine 878.

The protein belongs to the peptidase M28 family. It depends on Zn(2+) as a cofactor.

The protein localises to the vacuole membrane. Its function is as follows. May be involved in vacuolar sorting and osmoregulation. This Coccidioides posadasii (strain RMSCC 757 / Silveira) (Valley fever fungus) protein is Vacuolar membrane protease.